The primary structure comprises 376 residues: Heat-inducible transcription repressor HrcA (376 aa).

Belongs to the HrcA family.

Negative regulator of class I heat shock genes (grpE-dnaK-dnaJ and groELS operons). Prevents heat-shock induction of these operons. The polypeptide is Heat-inducible transcription repressor HrcA (Nostoc punctiforme (strain ATCC 29133 / PCC 73102)).